The primary structure comprises 1344 residues: Xanthine dehydrogenase (1344 aa).

Positions 9–96 constitute a 2Fe-2S ferredoxin-type domain; sequence SVLVFFVNGK…GCAVTTVEGI (88 aa). [2Fe-2S] cluster-binding residues include C48, C53, C56, C78, C118, C121, C153, and C155. The 190-residue stretch at 236–425 folds into the FAD-binding PCMH-type domain; that stretch reads FSSERVTWYR…LGIHFQKTTP (190 aa). FAD contacts are provided by residues 264–271, F344, 354–358, D367, L415, and K433; these read LVVGNTEV and CLGGN. The Mo-molybdopterin site is built by Q781 and F812. E816 and R894 together coordinate substrate. Residue R926 participates in Mo-molybdopterin binding. Substrate is bound at residue F928. Mo-molybdopterin is bound at residue A1093. The active-site Proton acceptor is the E1276.

This sequence belongs to the xanthine dehydrogenase family. As to quaternary structure, homodimer. FAD serves as cofactor. Requires Mo-molybdopterin as cofactor. The cofactor is [2Fe-2S] cluster.

Its subcellular location is the peroxisome. It carries out the reaction xanthine + NAD(+) + H2O = urate + NADH + H(+). The catalysed reaction is hypoxanthine + NAD(+) + H2O = xanthine + NADH + H(+). Key enzyme in purine degradation. Catalyzes the oxidation of hypoxanthine to xanthine. Catalyzes the oxidation of xanthine to uric acid. The protein is Xanthine dehydrogenase (Xdh) of Drosophila subobscura (Fruit fly).